The primary structure comprises 198 residues: Probable GTP-binding protein EngB (198 aa).

The region spanning 22–195 (DLPEIALAGR…WKAIHKMTKT (174 aa)) is the EngB-type G domain. GTP contacts are provided by residues 30-37 (GRSNVGKS), 57-61 (GKTQT), 75-78 (DVPG), 142-145 (TKAD), and 174-176 (FSS). Residues Ser-37 and Thr-59 each coordinate Mg(2+).

The protein belongs to the TRAFAC class TrmE-Era-EngA-EngB-Septin-like GTPase superfamily. EngB GTPase family. Mg(2+) is required as a cofactor.

Necessary for normal cell division and for the maintenance of normal septation. In Bacillus cereus (strain G9842), this protein is Probable GTP-binding protein EngB.